A 28-amino-acid chain; its full sequence is ACKPKNNLCAITEMAECCSGFCLIYRCS.

3 disulfide bridges follow: C2/C18, C9/C22, and C17/C27. P4 is subject to 4-hydroxyproline. 4-carboxyglutamate is present on residues E13 and E16. S28 is subject to Serine amide.

The protein belongs to the conotoxin O1 superfamily. As to expression, expressed by the venom duct.

The protein resides in the secreted. Gamma-conotoxins may act on voltage-gated non-specific cation pacemaker channels (HCN). This chain is Gamma-conotoxin-like de7a, found in Conasprella delessertii (Sozon's cone).